A 273-amino-acid polypeptide reads, in one-letter code: ABC transporter glutamine-binding protein GlnH (273 aa).

The N-terminal stretch at 1–20 is a signal peptide; sequence MKKIFSLALISLFAVILLAA. Residue Cys21 is the site of N-palmitoyl cysteine attachment. Cys21 is lipidated: S-diacylglycerol cysteine.

Belongs to the bacterial solute-binding protein 3 family. In terms of assembly, the complex is composed of two ATP-binding proteins (GlnQ), two transmembrane proteins (GlnM and GlnP) and a solute-binding protein (GlnH).

Its subcellular location is the cell membrane. In terms of biological role, part of the ABC transporter complex GlnHMPQ involved in glutamine transport. In Bacillus subtilis (strain 168), this protein is ABC transporter glutamine-binding protein GlnH (glnH).